The chain runs to 216 residues: Probable GTP-binding protein EngB (216 aa).

In terms of domain architecture, EngB-type G spans 37–214; it reads AGLEVAFAGR…RAAMIKLIAE (178 aa). GTP-binding positions include 45–52, 72–76, 92–95, 159–162, and 193–195; these read GRSNVGKS, GRTQE, DMPG, TKAD, and TSS. Mg(2+) is bound by residues serine 52 and threonine 74.

The protein belongs to the TRAFAC class TrmE-Era-EngA-EngB-Septin-like GTPase superfamily. EngB GTPase family. Mg(2+) is required as a cofactor.

Its function is as follows. Necessary for normal cell division and for the maintenance of normal septation. This chain is Probable GTP-binding protein EngB, found in Rhodopseudomonas palustris (strain BisB18).